The chain runs to 341 residues: UPF0283 membrane protein HD_1769 (341 aa).

The next 3 membrane-spanning stretches (helical) occupy residues 57 to 77 (LLAV…QCLI), 86 to 106 (IDLA…GAII), and 204 to 224 (ENAI…MIAW).

Belongs to the UPF0283 family.

It is found in the cell inner membrane. The chain is UPF0283 membrane protein HD_1769 from Haemophilus ducreyi (strain 35000HP / ATCC 700724).